The sequence spans 145 residues: Arginine repressor (145 aa).

This sequence belongs to the ArgR family.

It is found in the cytoplasm. The protein operates within amino-acid biosynthesis; L-arginine biosynthesis [regulation]. Functionally, regulates arginine biosynthesis genes. This chain is Arginine repressor, found in Streptococcus mutans serotype c (strain ATCC 700610 / UA159).